A 173-amino-acid polypeptide reads, in one-letter code: MNALQWSFRAQCLTGFLFCTGLLAYAIFLQLHQGLEPCPLCIFQRIAFAVLGILFLIAGLYNSSNVYTRKAYGLLIFLTAAIGTGIAGRHVWVQLMPHNTISSCGSPLSFLSETMGPFEVFRTVLTGTSDCGNIDWRFLGLSMPMWSMFWFVALALLGLLVGFKAERRKPLFS.

At 1 to 11 the chain is on the cytoplasmic side; the sequence is MNALQWSFRAQ. Residues 12–28 traverse the membrane as a helical segment; the sequence is CLTGFLFCTGLLAYAIF. Residues 29–46 are Periplasmic-facing; sequence LQLHQGLEPCPLCIFQRI. An intrachain disulfide couples Cys38 to Cys41. The chain crosses the membrane as a helical span at residues 47–63; sequence AFAVLGILFLIAGLYNS. Residues 64–70 lie on the Cytoplasmic side of the membrane; the sequence is SNVYTRK. Residues 71–88 form a helical membrane-spanning segment; sequence AYGLLIFLTAAIGTGIAG. Over 89–145 the chain is Periplasmic; it reads RHVWVQLMPHNTISSCGSPLSFLSETMGPFEVFRTVLTGTSDCGNIDWRFLGLSMPM. Residues Cys104 and Cys131 are joined by a disulfide bond. A helical transmembrane segment spans residues 146–164; that stretch reads WSMFWFVALALLGLLVGFK. At 165–173 the chain is on the cytoplasmic side; the sequence is AERRKPLFS.

Belongs to the DsbB family.

The protein localises to the cell inner membrane. Required for disulfide bond formation in some periplasmic proteins. Acts by oxidizing the DsbA protein. The polypeptide is Disulfide bond formation protein B (Xylella fastidiosa (strain 9a5c)).